Here is a 203-residue protein sequence, read N- to C-terminus: Large ribosomal subunit protein bL25 (203 aa).

The segment at 182–203 is disordered; the sequence is EITEEPETEEKKEEGASSVSNS.

This sequence belongs to the bacterial ribosomal protein bL25 family. CTC subfamily. In terms of assembly, part of the 50S ribosomal subunit; part of the 5S rRNA/L5/L18/L25 subcomplex. Contacts the 5S rRNA. Binds to the 5S rRNA independently of L5 and L18.

Functionally, this is one of the proteins that binds to the 5S RNA in the ribosome where it forms part of the central protuberance. The protein is Large ribosomal subunit protein bL25 of Caldicellulosiruptor saccharolyticus (strain ATCC 43494 / DSM 8903 / Tp8T 6331).